The chain runs to 718 residues: Amino-acid acetyltransferase, mitochondrial (718 aa).

The transit peptide at 1 to 36 (MNPNAVWPRTAQSSLKKHQVSLCTCQRRSHYRLRSF) directs the protein to the mitochondrion. Residues 97 to 116 (QHQPDLPQKPTSAPASTAKI) are disordered. Residues 539–708 (RQPRLRLDDP…YEAVCRSIQP (170 aa)) form the N-acetyltransferase domain.

It belongs to the acetyltransferase family.

The protein localises to the mitochondrion. It catalyses the reaction L-glutamate + acetyl-CoA = N-acetyl-L-glutamate + CoA + H(+). Its pathway is amino-acid biosynthesis; L-arginine biosynthesis; N(2)-acetyl-L-ornithine from L-glutamate: step 1/4. Its function is as follows. N-acetylglutamate synthase involved in arginine biosynthesis. The sequence is that of Amino-acid acetyltransferase, mitochondrial (arg2) from Aspergillus clavatus (strain ATCC 1007 / CBS 513.65 / DSM 816 / NCTC 3887 / NRRL 1 / QM 1276 / 107).